Reading from the N-terminus, the 335-residue chain is Galactosylgalactosylxylosylprotein 3-beta-glucuronosyltransferase 3 (335 aa).

The Cytoplasmic portion of the chain corresponds to 1–7; the sequence is MKLKLKN. Residues 8-28 form a helical; Signal-anchor for type II membrane protein membrane-spanning segment; it reads VFLAYFLVSIAGLLYALVQLG. Topologically, residues 29–335 are lumenal; sequence QPCDCLPPLR…GQGSDPAIEV (307 aa). D196 contacts Mn(2+). Catalysis depends on E281, which acts as the Proton acceptor. An N-linked (GlcNAc...) asparagine glycan is attached at N300. A compositionally biased stretch (basic and acidic residues) spans 312 to 322; that stretch reads EKPKMKQEEQL. The tract at residues 312–335 is disordered; it reads EKPKMKQEEQLQRQGQGSDPAIEV.

It belongs to the glycosyltransferase 43 family. As to quaternary structure, homodimer; disulfide-linked. Interacts with PXYLP1; the interaction increases the 2-phosphoxylose phosphatase activity of PXYLP1 during completion of linkage region formation in a B3GAT3-mediated manner. Requires Mn(2+) as cofactor. Post-translationally, N-glycosylated. In terms of tissue distribution, liver, brain and heart. Moderate expression seen in lung, skeletal muscle, kidney and testis.

It is found in the golgi apparatus membrane. Its subcellular location is the golgi apparatus. The protein localises to the cis-Golgi network. It carries out the reaction 3-O-(beta-D-galactosyl-(1-&gt;3)-beta-D-galactosyl-(1-&gt;4)-beta-D-xylosyl)-L-seryl-[protein] + UDP-alpha-D-glucuronate = 3-O-(beta-D-GlcA-(1-&gt;3)-beta-D-Gal-(1-&gt;3)-beta-D-Gal-(1-&gt;4)-beta-D-Xyl)-L-seryl-[protein] + UDP + H(+). It functions in the pathway protein modification; protein glycosylation. Functionally, glycosaminoglycans biosynthesis. Involved in forming the linkage tetrasaccharide present in heparan sulfate and chondroitin sulfate. Transfers a glucuronic acid moiety from the uridine diphosphate-glucuronic acid (UDP-GlcUA) to the common linkage region trisaccharide Gal-beta-1,3-Gal-beta-1,4-Xyl covalently bound to a Ser residue at the glycosaminylglycan attachment site of proteoglycans. Can also play a role in the biosynthesis of l2/HNK-1 carbohydrate epitope on glycoproteins. Highest activity seen with Gal-beta-1,3-Gal-beta-O-R (where R=naphthalenemethanol or benzyl alcohol). Stimulates 2-phosphoxylose phosphatase activity of PXYLP1 in presence of uridine diphosphate-glucuronic acid (UDP-GlcUA) during completion of linkage region formation. In Cricetulus griseus (Chinese hamster), this protein is Galactosylgalactosylxylosylprotein 3-beta-glucuronosyltransferase 3 (B3GAT3).